Consider the following 500-residue polypeptide: Transcription factor-like 5 protein (500 aa).

Composition is skewed to pro residues over residues 1–12 and 196–210; these read MSGPGPREPPPE and AEPPPAPRGPEPPEP. Disordered regions lie at residues 1-34 and 191-211; these read MSGPGPREPPPEAGAAGGEAAVEGAGGGDAALGE and FNSIPAEPPPAPRGPEPPEPG. The tract at residues 347–356 is R3 epitope (recognized by Chagas's antibodies); it reads MRQLDTNVER. Positions 365-410 are disordered; it reads VGEGATATQGAWQSSESSQANLGEQAQSGPQGGRSQRRERHNRMER. Residues 370–393 show a composition bias toward polar residues; that stretch reads TATQGAWQSSESSQANLGEQAQSG. The 51-residue stretch at 400–450 folds into the bHLH domain; that stretch reads QRRERHNRMERDRRRRIRICCDELNLLVPFCNAETDKATTLQWTTAFLKYI. Positions 481 to 500 are R1 epitope (recognized by Chagas's antibodies); it reads SLVTCPAQGSLQSSPSMEIK.

In terms of assembly, efficient DNA binding requires dimerization with another bHLH protein. In terms of tissue distribution, isoform 3 is testis specific. Isoform 2 is pancreas specific.

It is found in the nucleus. In terms of biological role, putative transcription factor. Isoform 3 may play a role in early spermatogenesis. This Homo sapiens (Human) protein is Transcription factor-like 5 protein (TCFL5).